The following is a 137-amino-acid chain: Protein archease (137 aa).

Positions 11, 136, and 137 each coordinate Ca(2+).

Belongs to the archease family.

In terms of biological role, activates the tRNA-splicing ligase complex by facilitating the enzymatic turnover of catalytic subunit RtcB. Acts by promoting the guanylylation of RtcB, a key intermediate step in tRNA ligation. Can also alter the NTP specificity of RtcB such that ATP, dGTP or ITP is used efficiently. The chain is Protein archease from Archaeoglobus fulgidus (strain ATCC 49558 / DSM 4304 / JCM 9628 / NBRC 100126 / VC-16).